A 375-amino-acid polypeptide reads, in one-letter code: Fructose-1,6-bisphosphate aldolase/phosphatase (375 aa).

The Proton acceptor; for FBP phosphatase activity role is filled by Asp-15. Mg(2+) contacts are provided by Asp-15, His-22, Asp-56, and Asp-57. Residue His-22 coordinates beta-D-fructose 1,6-bisphosphate. His-22 provides a ligand contact to dihydroxyacetone phosphate. Tyr-94 is a beta-D-fructose 1,6-bisphosphate binding site. Position 98 (Gln-98) interacts with Mg(2+). 107-108 (GN) is a binding site for beta-D-fructose 1,6-bisphosphate. A Mg(2+)-binding site is contributed by Asp-135. Lys-136 is a beta-D-fructose 1,6-bisphosphate binding site. Lys-136 contacts dihydroxyacetone phosphate. The Proton donor/acceptor; for FBP aldolase activity role is filled by Tyr-237. Lys-240, Asp-241, and Asp-242 together coordinate Mg(2+). Lys-240 serves as the catalytic Schiff-base intermediate with DHAP; for FBP aldolase activity. Residues 250–251 (QS), Arg-274, Asp-295, and Tyr-357 contribute to the beta-D-fructose 1,6-bisphosphate site. The dihydroxyacetone phosphate site is built by Arg-274 and Asp-295.

The protein belongs to the FBP aldolase/phosphatase family. Homooctamer; dimer of tetramers. It depends on Mg(2+) as a cofactor.

The catalysed reaction is beta-D-fructose 1,6-bisphosphate + H2O = beta-D-fructose 6-phosphate + phosphate. It catalyses the reaction beta-D-fructose 1,6-bisphosphate = D-glyceraldehyde 3-phosphate + dihydroxyacetone phosphate. Its pathway is carbohydrate biosynthesis; gluconeogenesis. Its activity is regulated as follows. Activity is enhanced by dithioerythritol, and is slightly inhibited by fructose 2,6-bisphosphate. AMP does not inhibit the enzyme activity. Its function is as follows. Catalyzes two subsequent steps in gluconeogenesis: the aldol condensation of dihydroxyacetone phosphate (DHAP) and glyceraldehyde-3-phosphate (GA3P) to fructose-1,6-bisphosphate (FBP), and the dephosphorylation of FBP to fructose-6-phosphate (F6P). Does not display hydrolase activity against fructose 2,6-bisphosphate, fructose 6-phosphate, fructose 1-phosphate, glucose 6-phosphate, and glucose 1-phosphate. Exhibits only negligible activity on inositol-1-phosphate (IMP). Is essential for the growth of T.kodakaraensis under gluconeogenic conditions. This is Fructose-1,6-bisphosphate aldolase/phosphatase from Thermococcus kodakarensis (strain ATCC BAA-918 / JCM 12380 / KOD1) (Pyrococcus kodakaraensis (strain KOD1)).